Consider the following 449-residue polypeptide: Packaging protein 1 (449 aa).

A compositionally biased stretch (basic residues) spans 1–10; sequence MESRGKHRLK. The tract at residues 1 to 64 is disordered; it reads MESRGKHRLK…SSNSILHCPP (64 aa). Over residues 11 to 25 the composition is skewed to basic and acidic residues; it reads KNGESKENLGEHEQA. Over residues 35-59 the composition is skewed to polar residues; the sequence is SADSLSSPVAEPNFSSPGGRSSNSI. Position 168–175 (168–175) interacts with ATP; the sequence is GPTGSGKS. A DNA-binding region spans residues 437 to 449; it reads TAYSKKCDKLANK.

It belongs to the adenoviridae packaging protein 1 family. In terms of assembly, homodimer. Part of a genome packaging complex composed of packaging proteins 1, 2 and 3; this complex specifically binds to the packaging sequence on the left end of viral genomic DNA and performs packaging of the viral genome. Interacts with protein 33K.

It is found in the virion. Its subcellular location is the host nucleus. The protein resides in the host nucleoplasm. It localises to the host nucleolus. Component of the packaging machinery which encapsidates the viral DNA into preformed capsids and transcriptional activator of the viral major late promoter (MLP). Binds, along with packaging proteins 2 and 3, to the specific packaging sequence on the left end of viral genomic DNA and displays ATPase activity thereby providing the power stroke of the packaging machinery. The activity of packaging protein IVa2 is stimulated by protein 33K which acts as a terminase. May be the protein that pumps DNA into the capsid powered by ATP hydrolysis. Specifically binds to the 5'-CG-3' nucleotides of the repeats making up the packaging sequence. Component of the DEF-A and DEF-B transcription factors that bind downstream elements of the major late promoter (MLP), and stimulate transcription from the MLP after initiation of viral DNA replication. DEF-A is a heterodimer packaging proteins 1 and 2 and DEF-B is a homodimer of packaging protein 1. This Mus musculus (Mouse) protein is Packaging protein 1.